The sequence spans 474 residues: PRAME family member 2 (474 aa).

An LRR 1; degenerate repeat occupies R97–C124. The LRR 2; degenerate repeat unit spans residues H179–Y203. An LRR 3; degenerate repeat occupies I204 to E230. An LRR 4; degenerate repeat occupies M231–R265. LRR repeat units follow at residues L266–L291, Q292–K323, H324–A342, A348–C375, and C376–H400.

Belongs to the PRAME family.

This Homo sapiens (Human) protein is PRAME family member 2.